The following is a 491-amino-acid chain: Delayed-rectifier potassium channel regulatory subunit KCNS3 (491 aa).

The Cytoplasmic segment spans residues 1–182 (MVFGEFFHRP…IRMENPAYCL (182 aa)). The chain crosses the membrane as a helical span at residues 183-204 (SAKLIAISSLSVVLASIVAMCV). Residues 205 to 220 (HSMSEFQNEDGEVDDP) lie on the Extracellular side of the membrane. A helical membrane pass occupies residues 221–243 (VLEGVEIACIAWFTGELAIRLVA). Topologically, residues 244–254 (APSQKKFWKNP) are cytoplasmic. Residues 255–275 (LNIIDFVSIIPFYATLAVDTK) traverse the membrane as a helical segment. The Extracellular portion of the chain corresponds to 276-285 (EEESEDIENM). The chain crosses the membrane as a helical; Voltage-sensor span at residues 286–306 (GKVVQILRLMRIFRILKLARH). Residues 307–321 (SVGLRSLGATLRHSY) lie on the Cytoplasmic side of the membrane. The chain crosses the membrane as a helical span at residues 322 to 343 (HEVGLLLLFLSVGISIFSVLIY). The Extracellular portion of the chain corresponds to 344–357 (SVEKDEHKSSLTSI). The helical intramembrane region spans 358-369 (PICWWWATISMT). The Selectivity filter motif lies at 370–375 (TVGYGD). Residues 370-377 (TVGYGDTH) lie within the membrane without spanning it. Residues 378 to 384 (PVTLAGK) are Extracellular-facing. A helical membrane pass occupies residues 385-413 (IIASTCIICGILVVALPITIIFNKFSKYY). At 414 to 491 (QKQKDMEVDQ…TASLENCTGK (78 aa)) the chain is on the cytoplasmic side.

Belongs to the potassium channel family. S (TC 1.A.1.2) subfamily. Kv9.3/KCNS3 sub-subfamily. In terms of assembly, heterotetramer with KCNB1. Does not form homomultimers.

It is found in the cell membrane. In terms of biological role, potassium channel regulatory subunit that modulates the delayed rectifier potassium channel activity of KCNB1 by namely slowing down the deactivation and inactivation time constants. While it does not form functional channel on its own, it can form functional heterotetrameric channels with KCNB1. The chain is Delayed-rectifier potassium channel regulatory subunit KCNS3 from Mus musculus (Mouse).